The primary structure comprises 421 residues: Fasciclin-like arabinogalactan protein ARB_02922 (421 aa).

A signal peptide spans 1-17 (MLLYYILVALWATVTYA). 2 FAS1 domains span residues 18-167 (KSFS…DRPL) and 169-296 (LPQS…SDVL). N-linked (GlcNAc...) asparagine glycosylation is found at asparagine 52, asparagine 75, asparagine 80, asparagine 120, asparagine 145, asparagine 181, asparagine 223, and asparagine 300. A disordered region spans residues 300-401 (NDTAKPVPNA…NTPQPGAAAT (102 aa)). Gly residues-rich tracts occupy residues 344 to 356 (TSGG…GGGE) and 372 to 387 (SGGG…GGPG). The span at 388-401 (PTATNTPQPGAAAT) shows a compositional bias: low complexity. Glycine 397 carries the GPI-anchor amidated glycine lipid modification. Positions 398–421 (AAATERAKAGLAAVVGLGVVLINA) are cleaved as a propeptide — removed in mature form.

This sequence belongs to the fasciclin-like AGP family.

It is found in the cell membrane. Its function is as follows. May be a cell surface adhesion protein. The protein is Fasciclin-like arabinogalactan protein ARB_02922 of Arthroderma benhamiae (strain ATCC MYA-4681 / CBS 112371) (Trichophyton mentagrophytes).